Consider the following 354-residue polypeptide: Guanine nucleotide-binding protein G(t) subunit alpha-3 (354 aa).

The tract at residues 1–26 (MGIGISSESKESAKRSKELEKKLQED) is disordered. Residue G2 is the site of N-myristoyl glycine attachment. A compositionally biased stretch (basic and acidic residues) spans 8-26 (ESKESAKRSKELEKKLQED). The G-alpha domain maps to 32–354 (RTVKLLLLGA…KENLKDCGLF (323 aa)). Positions 35–48 (KLLLLGAGESGKST) are G1 motif. GTP-binding positions include 40–47 (GAGESGKS), 175–181 (LHSRVKT), 200–204 (DVGGQ), 269–272 (NKKD), and A326. Mg(2+) contacts are provided by S47 and T181. The interval 173 to 181 (DVLHSRVKT) is G2 motif. Residues 196–205 (FRMFDVGGQR) are G3 motif. The tract at residues 265-272 (VLFLNKKD) is G4 motif. The G5 motif stretch occupies residues 324–329 (TCATDT).

It belongs to the G-alpha family. G(i/o/t/z) subfamily. G proteins are composed of 3 units; alpha, beta and gamma, respectively GNAT3, GNB1 and GNG13 for Gustducin heterotrimer for bitter taste transduction. The alpha chain contains the guanine nucleotide binding site. Component of the TAS2R14-GNAT3 complex, consisting of TAS2R14, GNAT3, GNB1 and GNG2; within the complex interacts with TAS2R14; this complex plays a role in the perception of bitterness. Gustducin heterotrimer may also be composed of GNAT3, GNB3 and GNG13. In terms of tissue distribution, expressed in epithelial cells of taste buds of the circumvallate, foliate and fungiform. Detected in various region of the respiratory track. Expressed also in spermatozoa.

It is found in the cytoplasm. Guanine nucleotide-binding protein (G protein) alpha subunit playing a prominent role in bitter and sweet taste transduction as well as in umami (monosodium glutamate, monopotassium glutamate, and inosine monophosphate) taste transduction. This Bos taurus (Bovine) protein is Guanine nucleotide-binding protein G(t) subunit alpha-3 (GNAT3).